Here is a 231-residue protein sequence, read N- to C-terminus: F-box protein SKIP8 (231 aa).

The tract at residues 1-24 (MPSTPLANGGTPPMGGGERTTVTT) is disordered. Residues 34 to 80 (VSMMEQLVPEITTHALSYLDYPSLCRLSMTNSLMRKAANDDNAWKAL) form the F-box domain.

Part of a SCF (ASK-cullin-F-box) protein ligase complex. Interacts with SKP1A/ASK1.

It functions in the pathway protein modification; protein ubiquitination. Component of SCF(ASK-cullin-F-box) E3 ubiquitin ligase complexes, which may mediate the ubiquitination and subsequent proteasomal degradation of target proteins. The chain is F-box protein SKIP8 (SKIP8) from Arabidopsis thaliana (Mouse-ear cress).